We begin with the raw amino-acid sequence, 463 residues long: Methionine aminopeptidase 2-2 (463 aa).

The tract at residues 1–107 (MGAKTFEGGD…VPLSQLFPDG (107 aa)) is disordered. Residues 37–53 (EDGDGEFGTDDDDDGDG) show a composition bias toward acidic residues. The segment covering 69-83 (PKKRKRSKKKKSNKK) has biased composition (basic residues). His-215 provides a ligand contact to substrate. A divalent metal cation-binding residues include Asp-236, Asp-247, and His-316. His-324 is a binding site for substrate. Residues Glu-349 and Glu-444 each coordinate a divalent metal cation.

The protein belongs to the peptidase M24A family. Methionine aminopeptidase eukaryotic type 2 subfamily. The cofactor is Co(2+). Zn(2+) is required as a cofactor. Requires Mn(2+) as cofactor. It depends on Fe(2+) as a cofactor.

It is found in the cytoplasm. It carries out the reaction Release of N-terminal amino acids, preferentially methionine, from peptides and arylamides.. Functionally, cotranslationally removes the N-terminal methionine from nascent proteins. The N-terminal methionine is often cleaved when the second residue in the primary sequence is small and uncharged (Met-Ala-, Cys, Gly, Pro, Ser, Thr, or Val). The chain is Methionine aminopeptidase 2-2 from Talaromyces marneffei (strain ATCC 18224 / CBS 334.59 / QM 7333) (Penicillium marneffei).